Here is a 312-residue protein sequence, read N- to C-terminus: Olfactory receptor 8G50 (312 aa).

The Extracellular segment spans residues 1–28 (MAYSNQSRVTEFIISGLTNKPELQLPLF). An N-linked (GlcNAc...) asparagine glycan is attached at N5. A helical membrane pass occupies residues 29–49 (LLFLGIYLFTVLGNLGMIILI). The Cytoplasmic segment spans residues 50-56 (LLSSHLH). A helical transmembrane segment spans residues 57 to 77 (TPMYFFLSSLSFIDLCYSTII). At 78–99 (TPKMLVNFVTTKNVISYQECMT) the chain is on the extracellular side. A disulfide bridge links C97 with C189. Residues 100 to 120 (QLYFFIAFVISECHMLAAMAY) traverse the membrane as a helical segment. Topologically, residues 121-143 (DRYVAICNPLLYNVTMSYQVCSW) are cytoplasmic. Residues 144–164 (MVGGVYGMGFIGAAIHTFCML) traverse the membrane as a helical segment. Residues 165–204 (RVVFCKDNIINHYFCDLFPLMELACSSTYVNEVVLLSLSA) lie on the Extracellular side of the membrane. A helical transmembrane segment spans residues 205-225 (FNIFIPTLTILGSYIFIIISI). At 226–244 (LRIKSTEGRFKAFSTCSSH) the chain is on the cytoplasmic side. The chain crosses the membrane as a helical span at residues 245 to 265 (FSAVSVFFGSLAFMYLQPFSV). At 266 to 274 (SSKDKGKVS) the chain is on the extracellular side. A helical membrane pass occupies residues 275 to 292 (SVFYTTIVPMLNPMIYSL). Topologically, residues 293–312 (RNRDVKLALNKLFQKKKFHV) are cytoplasmic.

The protein belongs to the G-protein coupled receptor 1 family.

The protein localises to the cell membrane. Functionally, odorant receptor. The polypeptide is Olfactory receptor 8G50 (Mus musculus (Mouse)).